The primary structure comprises 56 residues: HVRNHFGSKPHKCGKCNYSCVNKSMLNSHMKSHTNVYQYRCADCTYATKYCHSLKL.

3 consecutive C2H2-type zinc fingers follow at residues 1 to 5, 11 to 33, and 39 to 56; these read HVRNH, HKCG…MKSH, and YRCA…SLKL.

Belongs to the hunchback C2H2-type zinc-finger protein family.

Its subcellular location is the nucleus. Gap class segmentation protein that controls development of head structures. In Bithynia tentaculata (Spire snail), this protein is Protein hunchback (hb).